A 353-amino-acid polypeptide reads, in one-letter code: Methylthioribose-1-phosphate isomerase (353 aa).

Substrate-binding positions include 51–53 (RGA), Arg94, and Gln199. Residue Asp240 is the Proton donor of the active site. 250-251 (NK) serves as a coordination point for substrate.

This sequence belongs to the eIF-2B alpha/beta/delta subunits family. MtnA subfamily. Homodimer.

It carries out the reaction 5-(methylsulfanyl)-alpha-D-ribose 1-phosphate = 5-(methylsulfanyl)-D-ribulose 1-phosphate. Its pathway is amino-acid biosynthesis; L-methionine biosynthesis via salvage pathway; L-methionine from S-methyl-5-thio-alpha-D-ribose 1-phosphate: step 1/6. Its function is as follows. Catalyzes the interconversion of methylthioribose-1-phosphate (MTR-1-P) into methylthioribulose-1-phosphate (MTRu-1-P). In Bacillus licheniformis (strain ATCC 14580 / DSM 13 / JCM 2505 / CCUG 7422 / NBRC 12200 / NCIMB 9375 / NCTC 10341 / NRRL NRS-1264 / Gibson 46), this protein is Methylthioribose-1-phosphate isomerase.